The sequence spans 594 residues: Phostensin (594 aa).

Basic and acidic residues-rich tracts occupy residues 18–33 (EEAAVRGREKAERDRL) and 109–125 (VLGDRKAGPLEVLERRS). 2 disordered regions span residues 18 to 238 (EEAA…PTDV) and 294 to 485 (VQDI…GKKR). Phosphoserine is present on residues serine 126, serine 134, serine 174, and serine 194. Composition is skewed to basic and acidic residues over residues 133–155 (QSPKGRESREERLSPRESRDRRL) and 167–190 (SLRDWRQSPAEARDLSSRPAEAQK). Threonine 198 is modified (phosphothreonine). Serine 224 is subject to Phosphoserine. Positions 353–364 (EAEEEAEKEEAE) are enriched in acidic residues. Residues 403–421 (PRPPTPAPLSPPPSAPTAP) are compositionally biased toward pro residues. Serine 412 carries the post-translational modification Phosphoserine. Lysine 437 is subject to N6-acetyllysine. Serine 510 carries the post-translational modification Phosphoserine. Residues 531-577 (YQYPSESSVLEDLGPEPETPIAPLATQPDEEEEEEEEEEELLLQPGL) are disordered. Residues 558 to 571 (PDEEEEEEEEEEEL) are compositionally biased toward acidic residues.

As to quaternary structure, interacts with Protein phosphatase 1 (PP1).

The protein localises to the cytoplasm. It localises to the cytoskeleton. May target protein phosphatase 1 to F-actin cytoskeleton. This is Phostensin (Ppp1r18) from Mus musculus (Mouse).